The sequence spans 179 residues: Peptide deformylase (179 aa).

The Fe cation site is built by C102 and H144. E145 is an active-site residue. H148 provides a ligand contact to Fe cation.

It belongs to the polypeptide deformylase family. Fe(2+) is required as a cofactor.

The enzyme catalyses N-terminal N-formyl-L-methionyl-[peptide] + H2O = N-terminal L-methionyl-[peptide] + formate. Removes the formyl group from the N-terminal Met of newly synthesized proteins. Requires at least a dipeptide for an efficient rate of reaction. N-terminal L-methionine is a prerequisite for activity but the enzyme has broad specificity at other positions. The polypeptide is Peptide deformylase (Wolbachia pipientis subsp. Culex pipiens (strain wPip)).